A 354-amino-acid chain; its full sequence is Ferrochelatase (354 aa).

Residues His-204 and Glu-306 each contribute to the Fe cation site.

This sequence belongs to the ferrochelatase family.

It localises to the cytoplasm. It carries out the reaction heme b + 2 H(+) = protoporphyrin IX + Fe(2+). The protein operates within porphyrin-containing compound metabolism; protoheme biosynthesis; protoheme from protoporphyrin-IX: step 1/1. Its function is as follows. Catalyzes the ferrous insertion into protoporphyrin IX. The protein is Ferrochelatase of Coxiella burnetii (strain CbuK_Q154) (Coxiella burnetii (strain Q154)).